The chain runs to 325 residues: Deoxyhypusine hydroxylase (325 aa).

Serine 2 is modified (N-acetylserine). HEAT-like PBS-type repeat units follow at residues 77 to 103 and 110 to 136; these read LKHEVAYVLGQTKNLDAAPTLRHVMLD and VRHEAAEALGALGDKDSLDDLNKAAKE. Residues histidine 79, glutamate 80, histidine 112, and glutamate 113 each coordinate Fe cation. Serine 126 bears the Phosphoserine mark. Threonine 187 carries the post-translational modification Phosphothreonine. HEAT-like PBS-type repeat units follow at residues 202–231, 235–261, and 268–294; these read LFQRYRAMFRLRDIGTDEAILALATGFSAE, FKHEIAYVFGQIGSPAAVPSLIEVLGR, and VRHEAAEALGAIASPEVVDVLKSYLND. Fe cation contacts are provided by histidine 237, glutamate 238, histidine 270, and glutamate 271. Residue serine 281 is modified to Phosphoserine.

It belongs to the deoxyhypusine hydroxylase family. Fe(2+) serves as cofactor.

Its subcellular location is the cytoplasm. The protein localises to the nucleus. It carries out the reaction [eIF5A protein]-deoxyhypusine + AH2 + O2 = [eIF5A protein]-hypusine + A + H2O. It participates in protein modification; eIF5A hypusination. Its function is as follows. Catalyzes the hydroxylation of the N(6)-(4-aminobutyl)-L-lysine intermediate to form hypusine, an essential post-translational modification only found in mature eIF-5A factor. This chain is Deoxyhypusine hydroxylase, found in Saccharomyces cerevisiae (strain ATCC 204508 / S288c) (Baker's yeast).